We begin with the raw amino-acid sequence, 118 residues long: Small ribosomal subunit protein uS13 (118 aa).

The interval 93 to 118 is disordered; it reads RNLPVRGQRSKTNARTRKGPRKPIKR.

It belongs to the universal ribosomal protein uS13 family. Part of the 30S ribosomal subunit. Forms a loose heterodimer with protein S19. Forms two bridges to the 50S subunit in the 70S ribosome.

Functionally, located at the top of the head of the 30S subunit, it contacts several helices of the 16S rRNA. In the 70S ribosome it contacts the 23S rRNA (bridge B1a) and protein L5 of the 50S subunit (bridge B1b), connecting the 2 subunits; these bridges are implicated in subunit movement. Contacts the tRNAs in the A and P-sites. This is Small ribosomal subunit protein uS13 from Saccharophagus degradans (strain 2-40 / ATCC 43961 / DSM 17024).